A 214-amino-acid polypeptide reads, in one-letter code: High frequency lysogenization protein HflD homolog (214 aa).

This sequence belongs to the HflD family.

The protein resides in the cytoplasm. The protein localises to the cell inner membrane. This Chromohalobacter salexigens (strain ATCC BAA-138 / DSM 3043 / CIP 106854 / NCIMB 13768 / 1H11) protein is High frequency lysogenization protein HflD homolog.